The primary structure comprises 245 residues: Caffeoyl-CoA O-methyltransferase (245 aa).

Lys-19 serves as a coordination point for substrate. Residues Thr-61, Glu-83, 85-86 (GV), Ser-91, Asp-109, and Ala-138 each bind S-adenosyl-L-methionine. Asp-161 is a binding site for substrate. Asp-161 lines the a divalent metal cation pocket. Asp-163 provides a ligand contact to S-adenosyl-L-methionine. Asp-187 and Asn-188 together coordinate a divalent metal cation. Asn-192 lines the substrate pocket.

The protein belongs to the class I-like SAM-binding methyltransferase superfamily. Cation-dependent O-methyltransferase family. CCoAMT subfamily. Requires a divalent metal cation as cofactor.

The catalysed reaction is (E)-caffeoyl-CoA + S-adenosyl-L-methionine = (E)-feruloyl-CoA + S-adenosyl-L-homocysteine + H(+). It functions in the pathway aromatic compound metabolism; phenylpropanoid biosynthesis. In terms of biological role, methylates caffeoyl-CoA to feruloyl-CoA and 5-hydroxyferuloyl-CoA to sinapoyl-CoA. Plays a role in the synthesis of feruloylated polysaccharides. Involved in the reinforcement of the plant cell wall. Also involved in the responding to wounding or pathogen challenge by the increased formation of cell wall-bound ferulic acid polymers. The polypeptide is Caffeoyl-CoA O-methyltransferase (CCOAOMT) (Zinnia elegans (Garden zinnia)).